The chain runs to 156 residues: Endoribonuclease YbeY (156 aa).

3 residues coordinate Zn(2+): His-115, His-119, and His-125.

The protein belongs to the endoribonuclease YbeY family. Zn(2+) is required as a cofactor.

The protein resides in the cytoplasm. In terms of biological role, single strand-specific metallo-endoribonuclease involved in late-stage 70S ribosome quality control and in maturation of the 3' terminus of the 16S rRNA. The chain is Endoribonuclease YbeY from Mannheimia succiniciproducens (strain KCTC 0769BP / MBEL55E).